Consider the following 357-residue polypeptide: Protein-glutamate methylesterase/protein-glutamine glutaminase 1 (357 aa).

One can recognise a Response regulatory domain in the interval 10-127; it reads RTLIVDDSAF…DVNKIEKELV (118 aa). At D61 the chain carries 4-aspartylphosphate. The CheB-type methylesterase domain maps to 159–353; that stretch reads SCAGDFAVLI…EEIVRMSEVK (195 aa). Active-site residues include S171, H198, and D295.

It belongs to the CheB family. In terms of processing, phosphorylated by CheA. Phosphorylation of the N-terminal regulatory domain activates the methylesterase activity.

The protein resides in the cytoplasm. The enzyme catalyses [protein]-L-glutamate 5-O-methyl ester + H2O = L-glutamyl-[protein] + methanol + H(+). The catalysed reaction is L-glutaminyl-[protein] + H2O = L-glutamyl-[protein] + NH4(+). In terms of biological role, involved in chemotaxis. Part of a chemotaxis signal transduction system that modulates chemotaxis in response to various stimuli. Catalyzes the demethylation of specific methylglutamate residues introduced into the chemoreceptors (methyl-accepting chemotaxis proteins or MCP) by CheR. Also mediates the irreversible deamidation of specific glutamine residues to glutamic acid. This chain is Protein-glutamate methylesterase/protein-glutamine glutaminase 1, found in Methanosarcina mazei (strain ATCC BAA-159 / DSM 3647 / Goe1 / Go1 / JCM 11833 / OCM 88) (Methanosarcina frisia).